A 298-amino-acid polypeptide reads, in one-letter code: Protoheme IX farnesyltransferase (298 aa).

9 helical membrane passes run 26-46, 52-72, 93-113, 120-140, 148-168, 174-194, 219-239, 241-261, and 278-298; these read VVSL…PGAV, LLGT…NCLV, VSVP…LFIL, LTMW…TVIL, IVIG…AITG, ALLL…ALAL, LHVL…YLTQ, SGLI…YYAI, and YSII…YFYF.

The protein belongs to the UbiA prenyltransferase family. Protoheme IX farnesyltransferase subfamily.

The protein localises to the cell inner membrane. It carries out the reaction heme b + (2E,6E)-farnesyl diphosphate + H2O = Fe(II)-heme o + diphosphate. Its pathway is porphyrin-containing compound metabolism; heme O biosynthesis; heme O from protoheme: step 1/1. Converts heme B (protoheme IX) to heme O by substitution of the vinyl group on carbon 2 of heme B porphyrin ring with a hydroxyethyl farnesyl side group. The polypeptide is Protoheme IX farnesyltransferase (Nitrosomonas eutropha (strain DSM 101675 / C91 / Nm57)).